Reading from the N-terminus, the 119-residue chain is MPRIKRGVTTRQKHKRLLDQAKGYRGRRKNTIRIARQAVEKAGQYAYRDRKVKKRSFRALWIQRINAAVRAEGLTYSQFMHGVKLAGIELDRKVMADLAMNEEAAFKSVIDQAKAALPA.

It belongs to the bacterial ribosomal protein bL20 family.

Its function is as follows. Binds directly to 23S ribosomal RNA and is necessary for the in vitro assembly process of the 50S ribosomal subunit. It is not involved in the protein synthesizing functions of that subunit. In Erythrobacter litoralis (strain HTCC2594), this protein is Large ribosomal subunit protein bL20.